The following is a 439-amino-acid chain: Mitochondrial distribution and morphology protein 12 (439 aa).

Positions 1-439 (MSIDINWDTI…VYPSFWTFLV (439 aa)) constitute an SMP-LTD domain. Disordered regions lie at residues 65–165 (PLPD…PGAL) and 229–284 (LTLT…HEKS). Residues 69–90 (FYEDDEDYPDEEGDEAENEAED) show a composition bias toward acidic residues. Over residues 109-121 (PSRDSQSRERGRG) the composition is skewed to basic and acidic residues. The segment covering 229 to 243 (LTLTPQSHPDPTSRP) has biased composition (polar residues).

This sequence belongs to the MDM12 family. Component of the ER-mitochondria encounter structure (ERMES) or MDM complex, composed of MMM1, MDM10, mdm12 and MDM34. An MMM1 homodimer associates with one molecule of mdm12 on each side in a pairwise head-to-tail manner, and the SMP-LTD domains of MMM1 and mdm12 generate a continuous hydrophobic tunnel for phospholipid trafficking.

The protein resides in the mitochondrion outer membrane. Its subcellular location is the endoplasmic reticulum membrane. Functionally, component of the ERMES/MDM complex, which serves as a molecular tether to connect the endoplasmic reticulum (ER) and mitochondria. Components of this complex are involved in the control of mitochondrial shape and protein biogenesis, and function in nonvesicular lipid trafficking between the ER and mitochondria. mdm12 is required for the interaction of the ER-resident membrane protein MMM1 and the outer mitochondrial membrane-resident beta-barrel protein MDM10. The mdm12-MMM1 subcomplex functions in the major beta-barrel assembly pathway that is responsible for biogenesis of all mitochondrial outer membrane beta-barrel proteins, and acts in a late step after the SAM complex. The MDM10-mdm12-MMM1 subcomplex further acts in the TOM40-specific pathway after the action of the mdm12-MMM1 complex. Essential for establishing and maintaining the structure of mitochondria and maintenance of mtDNA nucleoids. This is Mitochondrial distribution and morphology protein 12 from Pyrenophora tritici-repentis (strain Pt-1C-BFP) (Wheat tan spot fungus).